The following is a 226-amino-acid chain: NAD(P)H-hydrate epimerase (226 aa).

The YjeF N-terminal domain occupies A10–L215. N58 to D62 lines the (6S)-NADPHX pocket. Residues N59 and D123 each contribute to the K(+) site. (6S)-NADPHX contacts are provided by residues G127–P133 and D156. Residue S159 coordinates K(+).

Belongs to the NnrE/AIBP family. It depends on K(+) as a cofactor.

It catalyses the reaction (6R)-NADHX = (6S)-NADHX. The catalysed reaction is (6R)-NADPHX = (6S)-NADPHX. Functionally, catalyzes the epimerization of the S- and R-forms of NAD(P)HX, a damaged form of NAD(P)H that is a result of enzymatic or heat-dependent hydration. This is a prerequisite for the S-specific NAD(P)H-hydrate dehydratase to allow the repair of both epimers of NAD(P)HX. The chain is NAD(P)H-hydrate epimerase from Drosophila pseudoobscura pseudoobscura (Fruit fly).